We begin with the raw amino-acid sequence, 375 residues long: GDP-mannose transporter GONST2 (375 aa).

9 consecutive transmembrane segments (helical) span residues 79–99, 112–132, 141–161, 165–185, 199–219, 262–282, 300–320, 327–347, and 349–369; these read LVSG…NKIV, MLYQ…SGVV, LIRV…SGMY, YINV…TGIG, WAAM…DLTF, MVLL…ILLG, VVAT…MWFL, TYSL…LVLF, and VPLS…GVVF.

Belongs to the nucleotide-sugar transporter family. GDP-Mannose:GMP antiporter (GMA) (TC 2.A.7.13) subfamily. Expressed in rosette leaves, stems, flowers and siliques.

It localises to the golgi apparatus membrane. Functionally, GDP-mannose transporter that may be involved in the import of GDP-mannose from the cytoplasm into the Golgi lumen. The sequence is that of GDP-mannose transporter GONST2 from Arabidopsis thaliana (Mouse-ear cress).